The sequence spans 229 residues: Non-structural protein P8 (229 aa).

Helical transmembrane passes span 119–139 and 162–182; these read IIHM…VCTL and SLNP…MVCA.

The protein belongs to the orbivirus NS3 family. Forms homooligomers via coiled-coil motif. Interacts with host OPTN; this interaction inhibits innate immune response.

The protein resides in the host cell membrane. The protein localises to the host Golgi apparatus. Plays a role in the inhibition of host innate immune response. Interacts with host OPTN and thus inhibits the recruitment of TBK1 to the host Golgi apparatus. In turn, downstream partner IRF3 cannot be activated and IFN-beta production is impaired. Functionally, facilitates viral particle release either by increasing plasma membrane permeability through a viroporin-like activity or by viral budding. This chain is Non-structural protein P8 (Segment-10), found in Bluetongue virus 17 (isolate USA) (BTV 17).